The following is a 612-amino-acid chain: Probable methyltransferase PMT9 (612 aa).

At 1–14 (MKHFRTERVRATPK) the chain is on the cytoplasmic side. Residues 15–35 (LFTYVLVGFIALLGLTCLYYG) traverse the membrane as a helical; Signal-anchor for type II membrane protein segment. Over 36–612 (SSFAPGSRKS…LWSLPAISVS (577 aa)) the chain is Lumenal. N-linked (GlcNAc...) asparagine glycans are attached at residues N107, N383, and N562.

Belongs to the methyltransferase superfamily.

It is found in the golgi apparatus membrane. The protein is Probable methyltransferase PMT9 of Arabidopsis thaliana (Mouse-ear cress).